Consider the following 179-residue polypeptide: Large ribosomal subunit protein uL5 (179 aa).

The protein belongs to the universal ribosomal protein uL5 family. Part of the 50S ribosomal subunit; part of the 5S rRNA/L5/L18/L25 subcomplex. Contacts the 5S rRNA and the P site tRNA. Forms a bridge to the 30S subunit in the 70S ribosome.

Its function is as follows. This is one of the proteins that bind and probably mediate the attachment of the 5S RNA into the large ribosomal subunit, where it forms part of the central protuberance. In the 70S ribosome it contacts protein S13 of the 30S subunit (bridge B1b), connecting the 2 subunits; this bridge is implicated in subunit movement. Contacts the P site tRNA; the 5S rRNA and some of its associated proteins might help stabilize positioning of ribosome-bound tRNAs. This is Large ribosomal subunit protein uL5 from Prochlorococcus marinus (strain MIT 9313).